We begin with the raw amino-acid sequence, 847 residues long: Alanine--tRNA ligase (847 aa).

Histidine 554, histidine 558, cysteine 656, and histidine 660 together coordinate Zn(2+).

It belongs to the class-II aminoacyl-tRNA synthetase family. The cofactor is Zn(2+).

It is found in the cytoplasm. The enzyme catalyses tRNA(Ala) + L-alanine + ATP = L-alanyl-tRNA(Ala) + AMP + diphosphate. In terms of biological role, catalyzes the attachment of alanine to tRNA(Ala) in a two-step reaction: alanine is first activated by ATP to form Ala-AMP and then transferred to the acceptor end of tRNA(Ala). Also edits incorrectly charged Ser-tRNA(Ala) and Gly-tRNA(Ala) via its editing domain. The polypeptide is Alanine--tRNA ligase (Helicobacter pylori (strain J99 / ATCC 700824) (Campylobacter pylori J99)).